Here is a 426-residue protein sequence, read N- to C-terminus: Riboflavin biosynthesis protein PYRD, chloroplastic (426 aa).

A chloroplast-targeting transit peptide spans 1–61 (MQISCLPISI…SQTGFSNPVL (61 aa)). The CMP/dCMP-type deaminase domain maps to 72–194 (VDDSFYMRKC…RLKDAGIDVT (123 aa)). H121 contributes to the Zn(2+) binding site. The Proton donor role is filled by E123. 2 residues coordinate Zn(2+): C146 and C155.

It depends on Zn(2+) as a cofactor.

The protein localises to the plastid. Its subcellular location is the chloroplast. It carries out the reaction 2,5-diamino-6-hydroxy-4-(5-phosphoribosylamino)-pyrimidine + H2O + H(+) = 5-amino-6-(5-phospho-D-ribosylamino)uracil + NH4(+). Its pathway is cofactor biosynthesis; riboflavin biosynthesis; 5-amino-6-(D-ribitylamino)uracil from GTP: step 2/4. In terms of biological role, monofunctional pyrimidine deaminase involved in the riboflavin biosynthesis pathway. Also has a reductase domain that lacks catalytically essential substrate-binding residues. The sequence is that of Riboflavin biosynthesis protein PYRD, chloroplastic (PYRD) from Arabidopsis thaliana (Mouse-ear cress).